We begin with the raw amino-acid sequence, 209 residues long: Uracil phosphoribosyltransferase (209 aa).

Residues Arg79, Arg104, and 131–139 (DPMLATGGS) each bind 5-phospho-alpha-D-ribose 1-diphosphate. Uracil-binding positions include Val194 and 199–201 (GDA). 5-phospho-alpha-D-ribose 1-diphosphate is bound at residue Asp200.

Belongs to the UPRTase family. Mg(2+) serves as cofactor.

It carries out the reaction UMP + diphosphate = 5-phospho-alpha-D-ribose 1-diphosphate + uracil. Its pathway is pyrimidine metabolism; UMP biosynthesis via salvage pathway; UMP from uracil: step 1/1. With respect to regulation, allosterically activated by GTP. Functionally, catalyzes the conversion of uracil and 5-phospho-alpha-D-ribose 1-diphosphate (PRPP) to UMP and diphosphate. The sequence is that of Uracil phosphoribosyltransferase from Clostridium botulinum (strain ATCC 19397 / Type A).